A 161-amino-acid chain; its full sequence is Ribosome maturation factor RimP (161 aa).

This sequence belongs to the RimP family.

It localises to the cytoplasm. Required for maturation of 30S ribosomal subunits. This chain is Ribosome maturation factor RimP, found in Herminiimonas arsenicoxydans.